Reading from the N-terminus, the 42-residue chain is Photosystem I reaction center subunit IX (42 aa).

A helical membrane pass occupies residues 7–27 (YLSVAPVLATLWFGSLAGLLI).

Belongs to the PsaJ family.

It localises to the plastid. The protein resides in the chloroplast thylakoid membrane. May help in the organization of the PsaE and PsaF subunits. The protein is Photosystem I reaction center subunit IX of Chloranthus spicatus (Chulantree).